Reading from the N-terminus, the 303-residue chain is Acetyltransferase ataH (303 aa).

The signal sequence occupies residues 1-23 (MPTTAAFLRALYILTTLRGIGTS). Helical transmembrane passes span 42 to 62 (FLLHTLVIIAAKYLVLDMMTF), 194 to 214 (LVFAISSCLHLAIDGRAGIML), and 257 to 277 (GYIWTWAFLSLVAPMYNFPLF).

It belongs to the wax synthase family.

It is found in the membrane. The protein operates within mycotoxin biosynthesis. Its function is as follows. Acetyltransferase; part of the gene cluster that mediates the biosynthesis of acetylaranotin, a member of the epipolythiodioxopiperazine (ETP) class of toxins characterized by a disulfide-bridged cyclic dipeptide. The first step of acetylaranotin biosynthesis is performed by the NRPS ataP which produces diketopiperazine cyclo-L-Phe-L-Phe via the condensation of 2 phenylalanines (L-Phe). The ataC domain of ataTC then catalyzes the formation of bishydroxylation of cyclo-L-Phe-L-Phe. The glutathione S-transferase domain ataG in ataIMG further catalyzes the conjugation of two glutathiones to the bishydroxylated intermediate. Next, the dipeptidase ataJ removes the Glu residues. The following step is performed by the carbon sulfur lyase domain ataI of ataIMG which may convert the bis-cysteinyl adduct to yield an epidithiol intermediate. The ataT domain from ataTC then catalyzes the oxidation of the free dithiols, followed by a cyclization step catalyzed by the cytochrome P450 ataF. AtaF probably acts as an epoxidase to promote a dual epoxidation formation at C8 and C9 along with C8' and C9', followed by the spontaneous nucleophilic attack of the amide nitrogens N10 and N10' to yield an intermediate with the pyrrolidine partial structure. The final steps of acetylaranotin biosynthesis involve the acetylation and ring rearrangement of an epitetrathiodiketopiperazine intermediate to produce acetylaranotin. AtaH probably catalyzes the acetylation of epitetrathiodiketopiperazine to produce a diacetate and ataY is responsible for the formation of the dihydrooxepin moiety that converts the diacetate intermediate to acetylaranotin via acetylapoaranotin. Both enzymes could function independently in the absence of the other. The acetylaranotin bis-thiomethyltransferase ataS located outside of acetylaranotin gene cluster is the main thiomethyltransferase responsible for converting acetylaranotin and its related intermediates to their methylated forms. This chain is Acetyltransferase ataH, found in Aspergillus terreus (strain NIH 2624 / FGSC A1156).